Consider the following 127-residue polypeptide: Fluoride-specific ion channel FluC (127 aa).

4 consecutive transmembrane segments (helical) span residues 4 to 24 (LLLA…MLSM), 35 to 55 (IGTL…FAWF), 71 to 91 (TGFC…VFLL), and 103 to 123 (VLIN…LFSA). The Na(+) site is built by glycine 75 and threonine 78.

It belongs to the fluoride channel Fluc/FEX (TC 1.A.43) family.

The protein localises to the cell inner membrane. The enzyme catalyses fluoride(in) = fluoride(out). With respect to regulation, na(+) is not transported, but it plays an essential structural role and its presence is essential for fluoride channel function. Its function is as follows. Fluoride-specific ion channel. Important for reducing fluoride concentration in the cell, thus reducing its toxicity. In Salmonella agona (strain SL483), this protein is Fluoride-specific ion channel FluC.